We begin with the raw amino-acid sequence, 152 residues long: Transcription elongation factor Spt5 (152 aa).

The KOW domain occupies 99-129 (EGDLVEVISGPFRGMQAQVVRVESTKNEVVL).

Belongs to the archaeal Spt5 family. In terms of assembly, heterodimer composed of Spt4 and Spt5. Interacts with RNA polymerase (RNAP).

Its function is as follows. Stimulates transcription elongation. The sequence is that of Transcription elongation factor Spt5 from Sulfolobus acidocaldarius (strain ATCC 33909 / DSM 639 / JCM 8929 / NBRC 15157 / NCIMB 11770).